The chain runs to 128 residues: DNA-directed RNA polymerase subunit omega (128 aa).

The protein belongs to the RNA polymerase subunit omega family. The RNAP catalytic core consists of 2 alpha, 1 beta, 1 beta' and 1 omega subunit. When a sigma factor is associated with the core the holoenzyme is formed, which can initiate transcription.

The catalysed reaction is RNA(n) + a ribonucleoside 5'-triphosphate = RNA(n+1) + diphosphate. Promotes RNA polymerase assembly. Latches the N- and C-terminal regions of the beta' subunit thereby facilitating its interaction with the beta and alpha subunits. This Azorhizobium caulinodans (strain ATCC 43989 / DSM 5975 / JCM 20966 / LMG 6465 / NBRC 14845 / NCIMB 13405 / ORS 571) protein is DNA-directed RNA polymerase subunit omega.